Here is a 65-residue protein sequence, read N- to C-terminus: Large ribosomal subunit protein bL35 (65 aa).

It belongs to the bacterial ribosomal protein bL35 family.

This is Large ribosomal subunit protein bL35 from Stenotrophomonas maltophilia (strain R551-3).